Here is a 245-residue protein sequence, read N- to C-terminus: MIIPALDLIDGTVVRLHQGDYGKQRDYGNDPLPRLQDYAAQGAEVLHLVDLTGAKDPAKRQIPLIKTLVAGVNVPVQVGGGVRSEEDVAALLEAGVARVVVGSTAVKSPERVKGWFERFGADALVLALDVRIDEQGNKQVAVSGWQENSGVSLEQLVETYLPVGLKHVLCTDISRDGTLAGSNVSLYEEVCARYPQVAFQSSGGIGDINDVAALRGTGVRGVIVGRALLEGKFTVKEAIACWQNA.

Asp-7 serves as the catalytic Proton acceptor. Asp-129 (proton donor) is an active-site residue.

This sequence belongs to the HisA/HisF family.

The protein resides in the cytoplasm. It catalyses the reaction 1-(5-phospho-beta-D-ribosyl)-5-[(5-phospho-beta-D-ribosylamino)methylideneamino]imidazole-4-carboxamide = 5-[(5-phospho-1-deoxy-D-ribulos-1-ylimino)methylamino]-1-(5-phospho-beta-D-ribosyl)imidazole-4-carboxamide. It participates in amino-acid biosynthesis; L-histidine biosynthesis; L-histidine from 5-phospho-alpha-D-ribose 1-diphosphate: step 4/9. This Escherichia coli (strain SMS-3-5 / SECEC) protein is 1-(5-phosphoribosyl)-5-[(5-phosphoribosylamino)methylideneamino] imidazole-4-carboxamide isomerase.